The following is a 102-amino-acid chain: MYAVVRTGGKQYKVSEGDFLKVEKLEGAVGDTVELSEVLMVGGDKVAIGTPLVPSASVVGKIVEQGKDKKILVFKSKRRKDSRKLNGHRQLRTILKIEKINA.

Belongs to the bacterial ribosomal protein bL21 family. Part of the 50S ribosomal subunit. Contacts protein L20.

This protein binds to 23S rRNA in the presence of protein L20. The polypeptide is Large ribosomal subunit protein bL21 (Geotalea uraniireducens (strain Rf4) (Geobacter uraniireducens)).